Reading from the N-terminus, the 113-residue chain is Large ribosomal subunit protein bL19 (113 aa).

Belongs to the bacterial ribosomal protein bL19 family.

Functionally, this protein is located at the 30S-50S ribosomal subunit interface and may play a role in the structure and function of the aminoacyl-tRNA binding site. The chain is Large ribosomal subunit protein bL19 from Corynebacterium glutamicum (strain R).